The primary structure comprises 549 residues: Hydroxylamine reductase (549 aa).

The [2Fe-2S] cluster site is built by Cys-3, Cys-6, Cys-18, and Cys-25. Hybrid [4Fe-2O-2S] cluster contacts are provided by His-248, Glu-272, Cys-316, Cys-404, Cys-432, Cys-457, Glu-491, and Lys-493. A Cysteine persulfide modification is found at Cys-404.

It belongs to the HCP family. [2Fe-2S] cluster is required as a cofactor. Requires hybrid [4Fe-2O-2S] cluster as cofactor.

Its subcellular location is the cytoplasm. It carries out the reaction A + NH4(+) + H2O = hydroxylamine + AH2 + H(+). Its function is as follows. Catalyzes the reduction of hydroxylamine to form NH(3) and H(2)O. The protein is Hydroxylamine reductase of Aeromonas hydrophila subsp. hydrophila (strain ATCC 7966 / DSM 30187 / BCRC 13018 / CCUG 14551 / JCM 1027 / KCTC 2358 / NCIMB 9240 / NCTC 8049).